The following is a 363-amino-acid chain: UDP-N-acetylglucosamine--N-acetylmuramyl-(pentapeptide) pyrophosphoryl-undecaprenol N-acetylglucosamine transferase (363 aa).

UDP-N-acetyl-alpha-D-glucosamine-binding positions include 10–12 (TGG), N124, S195, and Q295.

It belongs to the glycosyltransferase 28 family. MurG subfamily.

The protein resides in the cell membrane. The enzyme catalyses di-trans,octa-cis-undecaprenyl diphospho-N-acetyl-alpha-D-muramoyl-L-alanyl-D-glutamyl-meso-2,6-diaminopimeloyl-D-alanyl-D-alanine + UDP-N-acetyl-alpha-D-glucosamine = di-trans,octa-cis-undecaprenyl diphospho-[N-acetyl-alpha-D-glucosaminyl-(1-&gt;4)]-N-acetyl-alpha-D-muramoyl-L-alanyl-D-glutamyl-meso-2,6-diaminopimeloyl-D-alanyl-D-alanine + UDP + H(+). Its pathway is cell wall biogenesis; peptidoglycan biosynthesis. Cell wall formation. Catalyzes the transfer of a GlcNAc subunit on undecaprenyl-pyrophosphoryl-MurNAc-pentapeptide (lipid intermediate I) to form undecaprenyl-pyrophosphoryl-MurNAc-(pentapeptide)GlcNAc (lipid intermediate II). This is UDP-N-acetylglucosamine--N-acetylmuramyl-(pentapeptide) pyrophosphoryl-undecaprenol N-acetylglucosamine transferase from Bacillus subtilis (strain 168).